A 118-amino-acid polypeptide reads, in one-letter code: Mu-like prophage FluMu tail tube protein (118 aa).

Residues 12–32 are disordered; sequence RLNGKEWPSDNDGTLTPGGKE.

It to phage Mu protein M.

This Haemophilus influenzae (strain ATCC 51907 / DSM 11121 / KW20 / Rd) protein is Mu-like prophage FluMu tail tube protein.